The following is a 93-amino-acid chain: Co-chaperonin GroES (93 aa).

Belongs to the GroES chaperonin family. Heptamer of 7 subunits arranged in a ring. Interacts with the chaperonin GroEL.

Its subcellular location is the cytoplasm. Its function is as follows. Together with the chaperonin GroEL, plays an essential role in assisting protein folding. The GroEL-GroES system forms a nano-cage that allows encapsulation of the non-native substrate proteins and provides a physical environment optimized to promote and accelerate protein folding. GroES binds to the apical surface of the GroEL ring, thereby capping the opening of the GroEL channel. The sequence is that of Co-chaperonin GroES from Streptococcus anginosus.